The sequence spans 540 residues: Probable protein kinase UbiB (540 aa).

Residues 24–44 (LLFDQPLLPWWLASLRLLMPW) form a helical membrane-spanning segment. One can recognise a Protein kinase domain in the interval 126–494 (RFDVEPLASA…RRRQGDRWAL (369 aa)). Residues 132–140 (LASASVAQV) and Lys-154 contribute to the ATP site. The Proton acceptor role is filled by Asp-289. Transmembrane regions (helical) follow at residues 496–516 (LLGA…AETA) and 518–538 (LAAP…YLIV).

It belongs to the ABC1 family. UbiB subfamily.

The protein resides in the cell inner membrane. Its pathway is cofactor biosynthesis; ubiquinone biosynthesis [regulation]. Is probably a protein kinase regulator of UbiI activity which is involved in aerobic coenzyme Q (ubiquinone) biosynthesis. This chain is Probable protein kinase UbiB, found in Pseudomonas putida (strain ATCC 700007 / DSM 6899 / JCM 31910 / BCRC 17059 / LMG 24140 / F1).